A 454-amino-acid polypeptide reads, in one-letter code: MTDRTCLSIVLAAGEGTRMKSNLPKVLHRVAGLPLVCHVVNAVRGTGKSDVALVVGRGAEDVRSAVEKIAGPVSAFEQKERLGTAHAVLAAREAIARGYDDLLIVFGDTPLIEAQSLLAARERLAQGADLVVIGFRPASPHGYGRLIEEGGQLVAIIEEKEATDEQKKIGFCNGGLMALRGQHALALLDAVGNDNAKGEYYLTDIVAIAHGKGLNVTAIEVPVDNVIGINNRAELAEAETIWQNRKRRELMLSGVTLIAPETVFFSYDTVIEPDVVIEPNVFFGPSVHVASGALIHSFSHLEGAQVGEKAEIGPFARLRPGADLAEKSKVGNFCEVKNAKVGKGAKINHLAYIGDAVIGASSNIGAGTITCNYDGYNKFKTIIGDNAFIGSNSSLVAPVEIGDNAYIASGSVITADVPADALALGRARQETKEGRAKILREKYAAIKAAKSVSK.

A pyrophosphorylase region spans residues 1–232; it reads MTDRTCLSIV…VDNVIGINNR (232 aa). Residues 11 to 14, Lys25, Gln78, and 83 to 84 each bind UDP-N-acetyl-alpha-D-glucosamine; these read LAAG and GT. Asp108 is a Mg(2+) binding site. 4 residues coordinate UDP-N-acetyl-alpha-D-glucosamine: Gly144, Glu158, Asn173, and Asn230. Asn230 is a binding site for Mg(2+). The linker stretch occupies residues 233–253; it reads AELAEAETIWQNRKRRELMLS. The tract at residues 254-454 is N-acetyltransferase; sequence GVTLIAPETV…AIKAAKSVSK (201 aa). Residues Arg319 and Lys337 each contribute to the UDP-N-acetyl-alpha-D-glucosamine site. Residue His349 is the Proton acceptor of the active site. 2 residues coordinate UDP-N-acetyl-alpha-D-glucosamine: Tyr352 and Asn363. Residues Ala366, 372 to 373, Ser391, Ser409, and Arg426 contribute to the acetyl-CoA site; that span reads NY.

In the N-terminal section; belongs to the N-acetylglucosamine-1-phosphate uridyltransferase family. This sequence in the C-terminal section; belongs to the transferase hexapeptide repeat family. In terms of assembly, homotrimer. It depends on Mg(2+) as a cofactor.

Its subcellular location is the cytoplasm. The catalysed reaction is alpha-D-glucosamine 1-phosphate + acetyl-CoA = N-acetyl-alpha-D-glucosamine 1-phosphate + CoA + H(+). The enzyme catalyses N-acetyl-alpha-D-glucosamine 1-phosphate + UTP + H(+) = UDP-N-acetyl-alpha-D-glucosamine + diphosphate. It participates in nucleotide-sugar biosynthesis; UDP-N-acetyl-alpha-D-glucosamine biosynthesis; N-acetyl-alpha-D-glucosamine 1-phosphate from alpha-D-glucosamine 6-phosphate (route II): step 2/2. Its pathway is nucleotide-sugar biosynthesis; UDP-N-acetyl-alpha-D-glucosamine biosynthesis; UDP-N-acetyl-alpha-D-glucosamine from N-acetyl-alpha-D-glucosamine 1-phosphate: step 1/1. It functions in the pathway bacterial outer membrane biogenesis; LPS lipid A biosynthesis. Functionally, catalyzes the last two sequential reactions in the de novo biosynthetic pathway for UDP-N-acetylglucosamine (UDP-GlcNAc). The C-terminal domain catalyzes the transfer of acetyl group from acetyl coenzyme A to glucosamine-1-phosphate (GlcN-1-P) to produce N-acetylglucosamine-1-phosphate (GlcNAc-1-P), which is converted into UDP-GlcNAc by the transfer of uridine 5-monophosphate (from uridine 5-triphosphate), a reaction catalyzed by the N-terminal domain. This Brucella melitensis biotype 1 (strain ATCC 23456 / CCUG 17765 / NCTC 10094 / 16M) protein is Bifunctional protein GlmU.